A 48-amino-acid chain; its full sequence is DNA-directed RNA polymerase subunit Rpo12 (48 aa).

Zn(2+) is bound by residues Cys-9, Cys-26, and Cys-29.

This sequence belongs to the archaeal Rpo12/eukaryotic RPC10 RNA polymerase subunit family. Part of the RNA polymerase complex. Zn(2+) is required as a cofactor.

It is found in the cytoplasm. It catalyses the reaction RNA(n) + a ribonucleoside 5'-triphosphate = RNA(n+1) + diphosphate. Functionally, DNA-dependent RNA polymerase (RNAP) catalyzes the transcription of DNA into RNA using the four ribonucleoside triphosphates as substrates. The protein is DNA-directed RNA polymerase subunit Rpo12 of Sulfurisphaera tokodaii (strain DSM 16993 / JCM 10545 / NBRC 100140 / 7) (Sulfolobus tokodaii).